The sequence spans 857 residues: ATP-dependent RNA helicase DDX24 (857 aa).

The segment at Asn-61–Lys-179 is disordered. Phosphoserine is present on residues Ser-80 and Ser-92. Residues Pro-152–Lys-161 show a composition bias toward basic residues. Ser-170 bears the Phosphoserine mark. A Q motif motif is present at residues Ser-193–Ala-221. One can recognise a Helicase ATP-binding domain in the interval Ala-225–Lys-528. ATP is bound at residue Ala-238–Thr-245. The interval Arg-279–Ala-363 is disordered. Phosphoserine is present on residues Ser-288 and Ser-296. Basic and acidic residues predominate over residues Cys-290 to Thr-307. Positions Ala-309 to Thr-330 are enriched in polar residues. Over residues Leu-345–Ala-363 the composition is skewed to basic and acidic residues. Lys-370 participates in a covalent cross-link: Glycyl lysine isopeptide (Lys-Gly) (interchain with G-Cter in SUMO2). The DEAD box motif lies at Asp-471–Asp-474. The Helicase C-terminal domain maps to Asp-576–Asp-723. Lys-624 participates in a covalent cross-link: Glycyl lysine isopeptide (Lys-Gly) (interchain with G-Cter in SUMO2). Residues Arg-808–Ser-857 form a disordered region. A compositionally biased stretch (polar residues) spans Asn-825–Ser-834. Residues Arg-835–Lys-844 are compositionally biased toward basic residues. Over residues Ala-848–Ser-857 the composition is skewed to pro residues.

The protein belongs to the DEAD box helicase family. DDX24/MAK5 subfamily. Interacts with FADD. Interacts with RIPK1; this interaction disrupts RLR signaling activation of IFN-dependent transcription factor IRF7. Interacts with NIP7. Interacts with EP300; this interaction prevents TP53 acetylation mediated by EP300. In terms of processing, ubiquitinated by MDM2 without targeting DDX24 for proteasomal degradation. Instead, polyubiquitylated DDX24 promotes interaction with NIP7, a component of pre-rRNP processing complex, and associates with pre-rRNA molecules and pre-ribosomal particles.

Its subcellular location is the cytoplasm. It localises to the nucleus. It carries out the reaction ATP + H2O = ADP + phosphate + H(+). In terms of biological role, ATP-dependent RNA helicase that plays a role in various aspects of RNA metabolism including pre-mRNA splicing and is thereby involved in different biological processes such as cell cycle regulation or innate immunity. Plays an inhibitory role in TP53 transcriptional activity and subsequently in TP53 controlled cell growth arrest and senescence by inhibiting its EP300 mediated acetylation. Negatively regulates cytosolic RNA-mediated innate immune signaling at least in part by affecting RIPK1/IRF7 interactions. Alternatively, possesses antiviral activity by recognizing gammaherpesvirus transcripts in the context of lytic reactivation. Plays an essential role in cell cycle regulation in vascular smooth muscle cells by interacting with and regulating FANCA (Fanconi anemia complementation group A) mRNA. The protein is ATP-dependent RNA helicase DDX24 (Ddx24) of Mus musculus (Mouse).